We begin with the raw amino-acid sequence, 204 residues long: Tat proofreading chaperone DmsD (204 aa).

The protein belongs to the TorD/DmsD family. DmsD subfamily.

Required for biogenesis/assembly of DMSO reductase, but not for the interaction of the DmsA signal peptide with the Tat system. May be part of a chaperone cascade complex that facilitates a folding-maturation pathway for the substrate protein. The sequence is that of Tat proofreading chaperone DmsD from Salmonella typhi.